A 619-amino-acid chain; its full sequence is Probable Xaa-Pro aminopeptidase P (619 aa).

Residues Asp416, Asp427, Glu525, and Glu539 each contribute to the Mn(2+) site.

This sequence belongs to the peptidase M24B family. Mn(2+) serves as cofactor.

It catalyses the reaction Release of any N-terminal amino acid, including proline, that is linked to proline, even from a dipeptide or tripeptide.. Its function is as follows. Catalyzes the removal of a penultimate prolyl residue from the N-termini of peptides. In Tuber melanosporum (strain Mel28) (Perigord black truffle), this protein is Probable Xaa-Pro aminopeptidase P (AMPP).